A 197-amino-acid polypeptide reads, in one-letter code: Rac-like GTP-binding protein RAC1 (197 aa).

A GTP-binding site is contributed by 13 to 20 (GDGAVGKT). The Effector region signature appears at 35–43 (YVPTVFDNF). GTP contacts are provided by residues 60–64 (DTAGQ) and 118–121 (TKLD). Cys194 carries the cysteine methyl ester modification. The S-geranylgeranyl cysteine moiety is linked to residue Cys194. Residues 195–197 (SIL) constitute a propeptide, removed in mature form.

The protein belongs to the small GTPase superfamily. Rho family.

It is found in the cytoplasm. The protein localises to the membrane. In terms of biological role, inactive GDP-bound Rho GTPases reside in the cytosol, are found in a complex with Rho GDP-dissociation inhibitors (Rho GDIs), and are released from the GDI protein in order to translocate to membranes upon activation. This chain is Rac-like GTP-binding protein RAC1 (RAC1), found in Lotus japonicus (Lotus corniculatus var. japonicus).